Here is a 722-residue protein sequence, read N- to C-terminus: Putative tyrosine-protein kinase in cps region (722 aa).

The next 2 helical transmembrane spans lie at I31–I53 and I427–L449.

Belongs to the etk/wzc family. Post-translationally, autophosphorylated on tyrosine residue(s).

It localises to the cell inner membrane. It carries out the reaction L-tyrosyl-[protein] + ATP = O-phospho-L-tyrosyl-[protein] + ADP + H(+). It functions in the pathway glycan metabolism; exopolysaccharide biosynthesis. In Klebsiella pneumoniae, this protein is Putative tyrosine-protein kinase in cps region.